The following is a 203-amino-acid chain: Shikimate kinase (203 aa).

ATP is bound at residue 38–43 (GAGKST). S42 contributes to the Mg(2+) binding site. Substrate-binding residues include D60, R84, and G106. R144 is a binding site for ATP. A substrate-binding site is contributed by R163.

This sequence belongs to the shikimate kinase family. As to quaternary structure, monomer. Mg(2+) is required as a cofactor.

The protein resides in the cytoplasm. The enzyme catalyses shikimate + ATP = 3-phosphoshikimate + ADP + H(+). The protein operates within metabolic intermediate biosynthesis; chorismate biosynthesis; chorismate from D-erythrose 4-phosphate and phosphoenolpyruvate: step 5/7. Functionally, catalyzes the specific phosphorylation of the 3-hydroxyl group of shikimic acid using ATP as a cosubstrate. In Rhodopseudomonas palustris (strain ATCC BAA-98 / CGA009), this protein is Shikimate kinase.